The primary structure comprises 436 residues: Aminopeptidase C (436 aa).

Active-site residues include cysteine 68, histidine 356, and asparagine 378.

It belongs to the peptidase C1 family. Homohexamer.

The enzyme catalyses Inactivates bleomycin B2 (a cytotoxic glycometallopeptide) by hydrolysis of a carboxyamide bond of beta-aminoalanine, but also shows general aminopeptidase activity. The specificity varies somewhat with source, but amino acid arylamides of Met, Leu and Ala are preferred.. Functionally, hydrolyzes naphthylamide-substituted amino acids as well as di- and tripeptides in which the half-cystine residue is involved in a disulfide loop, notably in oxytocin and vasopressin. Also has a bleomycin hydrolase activity. This is Aminopeptidase C (pepC) from Lactococcus lactis subsp. cremoris (Streptococcus cremoris).